The primary structure comprises 577 residues: Sensor histidine kinase YesM (577 aa).

Residues 1 to 17 are Cytoplasmic-facing; that stretch reads MKKRVAGWYRRMKIKDK. A helical transmembrane segment spans residues 18-38; the sequence is LFVFLSLIMAVSFLFVYSGVQ. The Extracellular segment spans residues 39–286; that stretch reads YAFHVYDEQI…PFDQMFAKIS (248 aa). The helical transmembrane segment at 287-307 threads the bilayer; that stretch reads FMKTVIGTCFLLFFCVVLLFG. At 308–577 the chain is on the cytoplasmic side; it reads RKIANSITEP…ITIPCRNEVV (270 aa). Positions 312–368 constitute an HAMP domain; it reads NSITEPIEQLVTAMKSVQHSGIEAGVSLSLPEHTQDEAGMLNRHFTVMMKRINELME. The Histidine kinase domain occupies 365–574; sequence ELMEENVEKQ…RIVITIPCRN (210 aa). At His392 the chain carries Phosphohistidine; by autocatalysis.

Its subcellular location is the cell membrane. The catalysed reaction is ATP + protein L-histidine = ADP + protein N-phospho-L-histidine.. Its function is as follows. Member of the two-component regulatory system YesM/YesN. Probably activates YesN by phosphorylation. This Bacillus subtilis (strain 168) protein is Sensor histidine kinase YesM (yesM).